Here is a 502-residue protein sequence, read N- to C-terminus: Glutamate--tRNA ligase (502 aa).

The 'HIGH' region motif lies at 12–22 (PSPTGYLHVGG). Positions 259-263 (KLSKR) match the 'KMSKS' region motif. Lysine 262 lines the ATP pocket.

Belongs to the class-I aminoacyl-tRNA synthetase family. Glutamate--tRNA ligase type 1 subfamily. Monomer.

It localises to the cytoplasm. It catalyses the reaction tRNA(Glu) + L-glutamate + ATP = L-glutamyl-tRNA(Glu) + AMP + diphosphate. Functionally, catalyzes the attachment of glutamate to tRNA(Glu) in a two-step reaction: glutamate is first activated by ATP to form Glu-AMP and then transferred to the acceptor end of tRNA(Glu). This is Glutamate--tRNA ligase from Chlorobium chlorochromatii (strain CaD3).